Here is a 491-residue protein sequence, read N- to C-terminus: FAD-dependent monooxygenase idtM (491 aa).

Glutamate 34, glycine 48, arginine 107, aspartate 307, and alanine 320 together coordinate FAD. The chain crosses the membrane as a helical span at residues 448–468 (ILSLVYVVAGLAMMYMSIYLV).

Belongs to the paxM FAD-dependent monooxygenase family. FAD serves as cofactor.

It localises to the membrane. The protein operates within secondary metabolite biosynthesis. In terms of biological role, FAD-dependent monooxygenase; part of the gene cluster that mediates the biosynthesis of paspalitrems, indole-diterpene (IDT) mycotoxins that are potent tremorgens in mammals. The geranylgeranyl diphosphate (GGPP) synthase idtG is proposed to catalyze the first step in IDT biosynthesis via catalysis of a series of iterative condensations of isopentenyl diphosphate (IPP) with dimethylallyl diphosphate (DMAPP), geranyl diphosphate (GPP), and farnesyl diphosphate (FPP), to form GGPP. Condensation of indole-3-glycerol phosphate with GGPP by the prenyltransferase idtC then forms 3-geranylgeranylindole (3-GGI). Epoxidation of the two terminal alkenes of the geranylgeranyl moiety by the FAD-dependent monooxygenase idtM, and cyclization by the terpene cyclase idtB then leads to the production of paspaline. The cytochrome P450 monooxygenase idtP then catalyzes oxidative elimination of the pendant methyl group at C-12 of paspaline and generates the C-10 ketone to yield 13-desoxypaxilline. The cytochrome P450 monooxygenase idtQ may catalyze the C-13 oxidation of 13-desoxypaxilline to afford paxilline. Considering that both paspalicine and paxilline were detected in C.paspali, idtQ also catalyzes the formation of paspalinine from 13-desoxypaxilline via paspalicine as an intermediate. Finally, the alpha-prenyltransferase idtF prenylates paspalinine at the C-20 or the C-21 positions to yield paspalitrems A and C, respectively. The hydroxylation of paspalitrem A at C-32 by a still unknown oxidase affords paspalitrem B. The polypeptide is FAD-dependent monooxygenase idtM (Claviceps paspali (Rye ergot fungus)).